We begin with the raw amino-acid sequence, 123 residues long: Ribosome-binding factor A (123 aa).

This sequence belongs to the RbfA family. Monomer. Binds 30S ribosomal subunits, but not 50S ribosomal subunits or 70S ribosomes.

The protein resides in the cytoplasm. One of several proteins that assist in the late maturation steps of the functional core of the 30S ribosomal subunit. Associates with free 30S ribosomal subunits (but not with 30S subunits that are part of 70S ribosomes or polysomes). Required for efficient processing of 16S rRNA. May interact with the 5'-terminal helix region of 16S rRNA. The protein is Ribosome-binding factor A of Cupriavidus metallidurans (strain ATCC 43123 / DSM 2839 / NBRC 102507 / CH34) (Ralstonia metallidurans).